A 353-amino-acid chain; its full sequence is Stachydrine N-demethylase reductase subunit Stc4 (353 aa).

The 104-residue stretch at 11 to 114 (SDAEPLECVT…IGPAGKFSIV (104 aa)) folds into the FAD-binding FR-type domain. A 2Fe-2S ferredoxin-type domain is found at 269-353 (AEIAFALSGV…KPLRRVSVEA (85 aa)). Residues Cys303, Cys308, Cys311, and Cys341 each contribute to the [2Fe-2S] cluster site.

In the N-terminal section; belongs to the FAD-binding oxidoreductase type 6 family. In terms of assembly, the system is probably composed of an oxygenase subunit (Stc2) and two reductase subunits (Stc3 and Stc4). Requires FAD as cofactor. [2Fe-2S] cluster serves as cofactor.

Reductase involved in the catabolism of stachydrine (L-proline betaine), a source of carbon and nitrogen. Part of a Rieske-type oxygenase system that catalyzes the demethylation of stachydrine to produce N-methyl-L-proline (monomethylproline). This subunit is probably involved in the transfer of electrons from NAD(P)H to the catalytic subunit Stc2. This Rhizobium meliloti (strain 1021) (Ensifer meliloti) protein is Stachydrine N-demethylase reductase subunit Stc4.